A 397-amino-acid chain; its full sequence is T-box transcription factor TBX19 (397 aa).

The segment at residues 48–216 (LWQRFREVTN…YNPFAKAFLD (169 aa)) is a DNA-binding region (T-box). Residues 220–248 (RNHPKDAPEAASEGQHMTYSHSPQAPHGC) form a disordered region.

It is found in the nucleus. Functionally, may be involved in the initial formation of the chordamesoderm. This chain is T-box transcription factor TBX19, found in Gallus gallus (Chicken).